The chain runs to 448 residues: NADH oxidase (448 aa).

Residues 7–11 (GSGAA), Cys-42, Val-80, 110–113 (ATGA), and Arg-132 each bind FAD. Cys-42 (redox-active) is an active-site residue. Residues 152–167 (VAVV…MAYG), Glu-179, and Gly-243 each bind NAD(+). Residues 271–281 (TSIPNIYAVGD), Gly-299, and Thr-300 each bind FAD. Residue Val-328 coordinates NAD(+). FAD is bound at residue Tyr-423.

It belongs to the class-III pyridine nucleotide-disulfide oxidoreductase family. It depends on FAD as a cofactor.

The catalysed reaction is 2 NADH + O2 + 2 H(+) = 2 NAD(+) + 2 H2O. In terms of biological role, catalyzes the four-electron reduction of molecular oxygen to water. This chain is NADH oxidase, found in Methanocaldococcus jannaschii (strain ATCC 43067 / DSM 2661 / JAL-1 / JCM 10045 / NBRC 100440) (Methanococcus jannaschii).